The following is a 740-amino-acid chain: Phosphoribosylformylglycinamidine synthase subunit PurL (740 aa).

Residue His-54 is part of the active site. ATP contacts are provided by Tyr-57 and Lys-96. Glu-98 is a Mg(2+) binding site. Residues 99–102 and Arg-121 each bind substrate; that span reads SHNH. Catalysis depends on His-100, which acts as the Proton acceptor. A Mg(2+)-binding site is contributed by Asp-122. Gln-245 serves as a coordination point for substrate. Asp-273 provides a ligand contact to Mg(2+). 317 to 319 serves as a coordination point for substrate; that stretch reads ESQ. The ATP site is built by Asp-499 and Gly-536. Asn-537 is a binding site for Mg(2+). Ser-539 contacts substrate.

It belongs to the FGAMS family. As to quaternary structure, monomer. Part of the FGAM synthase complex composed of 1 PurL, 1 PurQ and 2 PurS subunits.

The protein resides in the cytoplasm. The enzyme catalyses N(2)-formyl-N(1)-(5-phospho-beta-D-ribosyl)glycinamide + L-glutamine + ATP + H2O = 2-formamido-N(1)-(5-O-phospho-beta-D-ribosyl)acetamidine + L-glutamate + ADP + phosphate + H(+). The protein operates within purine metabolism; IMP biosynthesis via de novo pathway; 5-amino-1-(5-phospho-D-ribosyl)imidazole from N(2)-formyl-N(1)-(5-phospho-D-ribosyl)glycinamide: step 1/2. Its function is as follows. Part of the phosphoribosylformylglycinamidine synthase complex involved in the purines biosynthetic pathway. Catalyzes the ATP-dependent conversion of formylglycinamide ribonucleotide (FGAR) and glutamine to yield formylglycinamidine ribonucleotide (FGAM) and glutamate. The FGAM synthase complex is composed of three subunits. PurQ produces an ammonia molecule by converting glutamine to glutamate. PurL transfers the ammonia molecule to FGAR to form FGAM in an ATP-dependent manner. PurS interacts with PurQ and PurL and is thought to assist in the transfer of the ammonia molecule from PurQ to PurL. The sequence is that of Phosphoribosylformylglycinamidine synthase subunit PurL from Anoxybacillus flavithermus (strain DSM 21510 / WK1).